Consider the following 159-residue polypeptide: Major latex protein 146 (159 aa).

The protein belongs to the MLP family. As to expression, laticifer.

Its subcellular location is the vacuole. It is found in the cytoplasmic vesicle. Its function is as follows. Not known; MLPs constitute up to 50% of the soluble latex protein. The chain is Major latex protein 146 (MLP146) from Papaver somniferum (Opium poppy).